We begin with the raw amino-acid sequence, 304 residues long: ATP phosphoribosyltransferase (304 aa).

This sequence belongs to the ATP phosphoribosyltransferase family.

Its subcellular location is the cytoplasm. It carries out the reaction 1-(5-phospho-beta-D-ribosyl)-ATP + diphosphate = 5-phospho-alpha-D-ribose 1-diphosphate + ATP. Its pathway is amino-acid biosynthesis; L-histidine biosynthesis; L-histidine from 5-phospho-alpha-D-ribose 1-diphosphate: step 1/9. Its function is as follows. Catalyzes the condensation of ATP and 5-phosphoribose 1-diphosphate to form N'-(5'-phosphoribosyl)-ATP (PR-ATP). Has a crucial role in the pathway because the rate of histidine biosynthesis seems to be controlled primarily by regulation of the enzymatic activity. The protein is ATP phosphoribosyltransferase (HIS1) of Debaryomyces hansenii (strain ATCC 36239 / CBS 767 / BCRC 21394 / JCM 1990 / NBRC 0083 / IGC 2968) (Yeast).